We begin with the raw amino-acid sequence, 456 residues long: MTOR-associated protein MEAK7 (456 aa).

A lipid anchor (N-myristoyl glycine) is attached at G2. In terms of domain architecture, TLDc spans 244–412 (SILDVLSVMY…FDKMEVWAVG (169 aa)).

As to quaternary structure, interacts (via C-terminal domain) with MTOR and MLST8; the interaction with MTOR increases upon nutrient stimulation.

The protein resides in the membrane. Its subcellular location is the cytoplasm. It localises to the lysosome. Functionally, activates an alternative mTOR signaling through RPS6KB2 activation and EIF4EBP1 repression to regulate cell proliferation and migration. Recruits MTOR at the lysosome, essential for MTOR signaling at the lysosome. In Homo sapiens (Human), this protein is MTOR-associated protein MEAK7.